The primary structure comprises 601 residues: Glutathione-regulated potassium-efflux system protein KefB (601 aa).

Helical transmembrane passes span 4 to 24 (SDFLLAGVLFLFAAVAAVPLA), 29 to 49 (IGAVLGYLLAGIAIGPWGLGF), 55 to 75 (EILHFSELGVVFLMFIIGLEL), 87 to 107 (IFGVGAAQVLLSAALLAGLLM), 115 to 135 (AAVVGGIGLAMSSTAMALQLM), 152 to 172 (VLLFQDLAVIPALALVPLLAG), 177 to 197 (HFDWMKIGMKVLAFVGMLIGG), 207 to 227 (FIAASGVREVFTAATLLLVLG), 230 to 250 (LFMDALGLSMALGTFIAGVLL), 262 to 282 (AIDPFKGLLLGLFFISVGMSL), 284 to 304 (LGVLYIHLLWVVISVVVLVAV), 324 to 344 (MQFAGVLSQGGEFAFVLFSTA), and 356 to 376 (ALLLVTVTLSMMTTPLLMKLV). Residues 400–519 (KPQVIVVGFG…AGVTQFSRET (120 aa)) form the RCK N-terminal domain.

It belongs to the monovalent cation:proton antiporter 2 (CPA2) transporter (TC 2.A.37) family. KefB subfamily. In terms of assembly, interacts with the regulatory subunit KefG.

It is found in the cell inner membrane. Functionally, pore-forming subunit of a potassium efflux system that confers protection against electrophiles. Catalyzes K(+)/H(+) antiport. In Shigella boydii serotype 18 (strain CDC 3083-94 / BS512), this protein is Glutathione-regulated potassium-efflux system protein KefB.